Consider the following 403-residue polypeptide: Na(+)-translocating NADH-quinone reductase subunit B (403 aa).

The next 4 helical transmembrane spans lie at 56 to 76 (MMIL…WNTG), 121 to 141 (AYFL…EVLF), 164 to 184 (LPPS…VVIG), and 195 to 212 (FLNP…AYPA). FMN phosphoryl threonine is present on Thr-230. The next 6 helical transmembrane spans lie at 237-257 (AGGV…FLGI), 265-285 (TSTL…IAAW), 287-307 (IVAG…LIGS), 312-332 (MFAM…GTLF), 348-368 (WAFG…NPAF), and 371-391 (GMML…HFVV).

Belongs to the NqrB/RnfD family. In terms of assembly, composed of six subunits; NqrA, NqrB, NqrC, NqrD, NqrE and NqrF. FMN serves as cofactor.

The protein localises to the cell inner membrane. The enzyme catalyses a ubiquinone + n Na(+)(in) + NADH + H(+) = a ubiquinol + n Na(+)(out) + NAD(+). Functionally, NQR complex catalyzes the reduction of ubiquinone-1 to ubiquinol by two successive reactions, coupled with the transport of Na(+) ions from the cytoplasm to the periplasm. NqrA to NqrE are probably involved in the second step, the conversion of ubisemiquinone to ubiquinol. The sequence is that of Na(+)-translocating NADH-quinone reductase subunit B from Azotobacter vinelandii (strain DJ / ATCC BAA-1303).